Consider the following 221-residue polypeptide: Urease accessory protein UreF (221 aa).

Belongs to the UreF family. As to quaternary structure, ureD, UreF and UreG form a complex that acts as a GTP-hydrolysis-dependent molecular chaperone, activating the urease apoprotein by helping to assemble the nickel containing metallocenter of UreC. The UreE protein probably delivers the nickel.

It is found in the cytoplasm. Its function is as follows. Required for maturation of urease via the functional incorporation of the urease nickel metallocenter. The chain is Urease accessory protein UreF from Aliivibrio fischeri (strain MJ11) (Vibrio fischeri).